The chain runs to 363 residues: Outer membrane porin F (363 aa).

The N-terminal stretch at 1–22 (MMKRKILAAVIPALLAAATANA) is a signal peptide.

The protein belongs to the Gram-negative porin family. As to quaternary structure, homotrimer. Forms mixed heterotrimers with OmpC and with PhoE; other mixed heterotrimers with other porins are also probable.

Its subcellular location is the cell outer membrane. In terms of biological role, forms pores that allow passive diffusion of small molecules across the outer membrane. The chain is Outer membrane porin F from Salmonella typhimurium (strain SL1344).